Reading from the N-terminus, the 571-residue chain is Hemagglutinin-neuraminidase (571 aa).

The Intravirion portion of the chain corresponds to 1-26; the sequence is MDRAVSRVVLENEEREAKNTWRFVFR. A helical transmembrane segment spans residues 27–47; the sequence is IAVLLLIVMTLAISAAALVYS. At 48–571 the chain is on the virion surface side; that stretch reads MGASTPRDLA…LVEILKDDRV (524 aa). N119 is a glycosylation site (N-linked (GlcNAc...) asparagine; by host). The tract at residues 124 to 152 is important for interaction with fusion/F protein; that stretch reads GAPVHDPDYIGGIGKELIVDDTSDVTSFY. 3 cysteine pairs are disulfide-bonded: C172-C196, C186-C247, and C238-C251. An involved in neuraminidase activity region spans residues 234–239; sequence NRKSCS. The N-linked (GlcNAc...) asparagine; by host glycan is linked to N341. An intrachain disulfide couples C455 to C465. N-linked (GlcNAc...) asparagine; by host glycosylation is found at N481 and N508. A disulfide bridge links C531 with C542.

It belongs to the paramyxoviruses hemagglutinin-neuraminidase family. Homotetramer; composed of disulfide-linked homodimers. Interacts with F protein trimer. Interacts with host CG-1B; this interaction inhibits viral adsorption and replication rather than internalization.

The protein resides in the virion membrane. The protein localises to the host cell membrane. It catalyses the reaction Hydrolysis of alpha-(2-&gt;3)-, alpha-(2-&gt;6)-, alpha-(2-&gt;8)- glycosidic linkages of terminal sialic acid residues in oligosaccharides, glycoproteins, glycolipids, colominic acid and synthetic substrates.. Its function is as follows. Mediates the viral entry into the host cell together with fusion/F protein. Attaches the virus to sialic acid-containing cell receptors and thereby initiates infection. Binding of HN protein to the receptor induces a conformational change that allows the F protein to trigger virion/cell membranes fusion. Functionally, neuraminidase activity ensures the efficient spread of the virus by dissociating the mature virions from the neuraminic acid containing glycoproteins. The polypeptide is Hemagglutinin-neuraminidase (HN) (Newcastle disease virus (strain Iba/85) (NDV)).